The following is a 403-amino-acid chain: Alkaline protease 1 (403 aa).

The N-terminal stretch at 1-21 (MQSIKRTLLLLGAILPAVLGA) is a signal peptide. Positions 22–125 (PVQETRRAAE…QIYYLDGLTT (104 aa)) are excised as a propeptide. The Inhibitor I9 domain maps to 36–120 (KYIVTFKPGI…YVEEDQIYYL (85 aa)). In terms of domain architecture, Peptidase S8 spans 130–403 (PWGLGSISHK…PNLLAYNGNA (274 aa)). Active-site charge relay system residues include Asp-162 and His-193. N-linked (GlcNAc...) asparagine glycosylation is present at Asn-253. Catalysis depends on Ser-349, which acts as the Charge relay system.

This sequence belongs to the peptidase S8 family.

It localises to the secreted. It catalyses the reaction Hydrolysis of proteins with broad specificity, and of Bz-Arg-OEt &gt; Ac-Tyr-OEt. Does not hydrolyze peptide amides.. Functionally, secreted alkaline protease that allows assimilation of proteinaceous substrates. This is Alkaline protease 1 (alp1) from Aspergillus flavus (strain ATCC 200026 / FGSC A1120 / IAM 13836 / NRRL 3357 / JCM 12722 / SRRC 167).